Reading from the N-terminus, the 342-residue chain is Methionyl-tRNA formyltransferase (342 aa).

110 to 113 (SLLP) contributes to the (6S)-5,6,7,8-tetrahydrofolate binding site.

It belongs to the Fmt family.

The catalysed reaction is L-methionyl-tRNA(fMet) + (6R)-10-formyltetrahydrofolate = N-formyl-L-methionyl-tRNA(fMet) + (6S)-5,6,7,8-tetrahydrofolate + H(+). Attaches a formyl group to the free amino group of methionyl-tRNA(fMet). The formyl group appears to play a dual role in the initiator identity of N-formylmethionyl-tRNA by promoting its recognition by IF2 and preventing the misappropriation of this tRNA by the elongation apparatus. This Synechococcus sp. (strain CC9311) protein is Methionyl-tRNA formyltransferase.